A 307-amino-acid chain; its full sequence is Transmembrane and coiled-coil domain-containing protein 5B (307 aa).

The stretch at 17 to 207 forms a coiled coil; sequence FASSLEAVKQ…LEKQISKAQD (191 aa). A helical transmembrane segment spans residues 243-265; the sequence is YFQYLTFMVLVFIRLLAYVIFHL.

It belongs to the TMCO5 family.

The protein resides in the membrane. This chain is Transmembrane and coiled-coil domain-containing protein 5B (TMCO5B), found in Homo sapiens (Human).